Here is a 762-residue protein sequence, read N- to C-terminus: LON peptidase N-terminal domain and RING finger protein 1 (762 aa).

Residues 1–35 form a disordered region; sequence MSSPAVARASPGGNREASGGPRSRNGPWEVGGGGE. The TPR 1 repeat unit spans residues 47–80; the sequence is WELLLRRGELLALGGHLKGALEAFAAALRRGAPA. The segment at 118-154 adopts an RING-type 1 zinc-finger fold; it reads CLSCRGFLSEPVTVPCGHSYCRRCLRRELRARCRLCR. TPR repeat units lie at residues 201-233, 235-267, and 268-301; these read ARAAGRLGELLHEGRYREALAAACDALRAEPSD, TLKIYRAESYAGLQEFKAALEDLNAVLFQLPNW, and PEVYFRKGKVLQDAGFLGDALQLFLQCLALDEDF. S420 bears the Phosphoserine mark. The segment at 468–506 adopts an RING-type 2 zinc-finger fold; the sequence is CSLCMRLFFEPVTTPCGHSFCKNCLERCLDHAPYCPLCK. Residues 547–757 form the Lon N-terminal domain; the sequence is TAELSHLTKN…KIQHILTYFS (211 aa).

The sequence is that of LON peptidase N-terminal domain and RING finger protein 1 (Lonrf1) from Mus musculus (Mouse).